We begin with the raw amino-acid sequence, 123 residues long: Gamma-synuclein (123 aa).

Repeat copies occupy residues Glu-20 to Ala-30 and Glu-31 to Gly-41. The 4 X 11 AA tandem repeats of [EGSA]-K-T-K-[EQ]-[GQ]-V-X(4) stretch occupies residues Glu-20–Ser-67. The stretch at Thr-42–Ala-56 is one 3; approximate repeat. Copy 4 of the repeat occupies Glu-57 to Ser-67. 2 positions are modified to phosphoserine: Ser-67 and Ser-72. The disordered stretch occupies residues Thr-91–Asp-123. Over residues Gln-107 to Asp-123 the composition is skewed to basic and acidic residues. Ser-120 bears the Phosphoserine; by BARK1, CaMK2 and CK2 mark.

The protein belongs to the synuclein family. In terms of assembly, may be a centrosome-associated protein. Interacts with MYOC; affects its secretion and its aggregation. Phosphorylated. Phosphorylation by GRK5 appears to occur on residues distinct from the residue phosphorylated by other kinases. In terms of tissue distribution, highly expressed in brain, particularly in the substantia nigra. Also expressed in the corpus callosum, heart, skeletal muscle, ovary, testis, colon and spleen. Weak expression in pancreas, kidney and lung. Expressed predominantly in the cell bodies and axons of primary sensory neurons, sympathetic neurons and motoneurons.

It is found in the cytoplasm. Its subcellular location is the perinuclear region. The protein localises to the cytoskeleton. The protein resides in the microtubule organizing center. It localises to the centrosome. It is found in the spindle. In terms of biological role, plays a role in neurofilament network integrity. May be involved in modulating axonal architecture during development and in the adult. In vitro, increases the susceptibility of neurofilament-H to calcium-dependent proteases. May also function in modulating the keratin network in skin. Activates the MAPK and Elk-1 signal transduction pathway. The polypeptide is Gamma-synuclein (Sncg) (Mus musculus (Mouse)).